A 156-amino-acid polypeptide reads, in one-letter code: Ribonuclease pancreatic (156 aa).

Positions M1–G28 are cleaved as a signal peptide. Substrate is bound by residues K35 and R38. H40 functions as the Proton acceptor in the catalytic mechanism. 4 disulfides stabilise this stretch: C54–C112, C68–C123, C86–C138, and C93–C100. Residue N62 is glycosylated (N-linked (GlcNAc...) asparagine). K69 to T73 contributes to the substrate binding site. N-linked (GlcNAc...) asparagine glycosylation is present at N90. Residues K94 and R113 each contribute to the substrate site. H147 serves as the catalytic Proton donor.

The protein belongs to the pancreatic ribonuclease family. As to quaternary structure, monomer. Interacts with and forms tight 1:1 complexes with RNH1. Dimerization of two such complexes may occur. Interaction with RNH1 inhibits this protein.

The protein localises to the secreted. The enzyme catalyses an [RNA] containing cytidine + H2O = an [RNA]-3'-cytidine-3'-phosphate + a 5'-hydroxy-ribonucleotide-3'-[RNA].. It carries out the reaction an [RNA] containing uridine + H2O = an [RNA]-3'-uridine-3'-phosphate + a 5'-hydroxy-ribonucleotide-3'-[RNA].. In terms of biological role, endonuclease that catalyzes the cleavage of RNA on the 3' side of pyrimidine nucleotides. Acts on single-stranded and double-stranded RNA. This is Ribonuclease pancreatic (RNASE1) from Lagothrix lagotricha (Brown woolly monkey).